We begin with the raw amino-acid sequence, 198 residues long: Large ribosomal subunit protein bL25 (198 aa).

This sequence belongs to the bacterial ribosomal protein bL25 family. CTC subfamily. As to quaternary structure, part of the 50S ribosomal subunit; part of the 5S rRNA/L5/L18/L25 subcomplex. Contacts the 5S rRNA. Binds to the 5S rRNA independently of L5 and L18.

In terms of biological role, this is one of the proteins that binds to the 5S RNA in the ribosome where it forms part of the central protuberance. The protein is Large ribosomal subunit protein bL25 of Bordetella avium (strain 197N).